The following is a 343-amino-acid chain: Aspartate-semialdehyde dehydrogenase (343 aa).

Residues 13–16 and 41–42 contribute to the NADP(+) site; these read TGAV and KS. Arg103 provides a ligand contact to phosphate. Residue Cys134 is the Acyl-thioester intermediate of the active site. Gln161 contributes to the substrate binding site. 164 to 165 is an NADP(+) binding site; it reads SG. Residue Lys220 coordinates phosphate. Arg241 contributes to the substrate binding site. The active-site Proton acceptor is the His248. Gln321 is an NADP(+) binding site.

Belongs to the aspartate-semialdehyde dehydrogenase family. Homodimer.

It catalyses the reaction L-aspartate 4-semialdehyde + phosphate + NADP(+) = 4-phospho-L-aspartate + NADPH + H(+). Its pathway is amino-acid biosynthesis; L-lysine biosynthesis via DAP pathway; (S)-tetrahydrodipicolinate from L-aspartate: step 2/4. It functions in the pathway amino-acid biosynthesis; L-methionine biosynthesis via de novo pathway; L-homoserine from L-aspartate: step 2/3. The protein operates within amino-acid biosynthesis; L-threonine biosynthesis; L-threonine from L-aspartate: step 2/5. In terms of biological role, catalyzes the NADPH-dependent formation of L-aspartate-semialdehyde (L-ASA) by the reductive dephosphorylation of L-aspartyl-4-phosphate. The protein is Aspartate-semialdehyde dehydrogenase of Campylobacter jejuni subsp. jejuni serotype O:2 (strain ATCC 700819 / NCTC 11168).